We begin with the raw amino-acid sequence, 276 residues long: Prohibitin 1 (276 aa).

This sequence belongs to the prohibitin family.

In terms of biological role, required for larval metabolism or for the progression of the larva into a pupa. This chain is Prohibitin 1, found in Drosophila melanogaster (Fruit fly).